Reading from the N-terminus, the 433-residue chain is Dihydroorotase (433 aa).

Residues H63 and H65 each contribute to the Zn(2+) site. Residues 65–67 and N97 each bind substrate; that span reads HLR. Residues D155, H182, and H235 each contribute to the Zn(2+) site. Substrate is bound at residue N283. D310 contributes to the Zn(2+) binding site. Residue D310 is part of the active site. Substrate is bound at residue H314.

It belongs to the metallo-dependent hydrolases superfamily. DHOase family. Class I DHOase subfamily. Zn(2+) serves as cofactor.

It carries out the reaction (S)-dihydroorotate + H2O = N-carbamoyl-L-aspartate + H(+). Its pathway is pyrimidine metabolism; UMP biosynthesis via de novo pathway; (S)-dihydroorotate from bicarbonate: step 3/3. In terms of biological role, catalyzes the reversible cyclization of carbamoyl aspartate to dihydroorotate. This chain is Dihydroorotase, found in Anaeromyxobacter dehalogenans (strain 2CP-C).